Here is a 90-residue protein sequence, read N- to C-terminus: Progonadoliberin-1 (90 aa).

An N-terminal signal peptide occupies residues 1 to 21 (MILKLMAGILLLTVCLEGCSS). At Q22 the chain carries Pyrrolidone carboxylic acid. Residue G31 is modified to Glycine amide.

This sequence belongs to the GnRH family. In terms of processing, the precursor is cleaved by ACE, which removes the Gly-Lys-Arg peptide at the C-terminus, leading to mature hormone. The mature form of Gonadoliberin-1 is also cleaved and degraded by ACE.

The protein localises to the secreted. Functionally, stimulates the secretion of gonadotropins; it stimulates the secretion of both luteinizing and follicle-stimulating hormones. In Mus musculus (Mouse), this protein is Progonadoliberin-1 (Gnrh1).